Reading from the N-terminus, the 387-residue chain is MNLHEYQAKQLFASYGLPVPRGEVAYNVEDALLVASQLSTSRWVVKAQVHAGGRGKAGGVKLVSSKDELAAVAKSMLGTRLVTYQTDARGQPVNAILVEETCEIDKELYLGAVVDRSTRRVVIMASTEGGVEIEKVAHETPEKIFKVVVDPLVGVMPFQCRETAFKLGLKDDQIKQFTHLMMGLGKMFVDCDLSLLEINPLVITKSGQLICLDGKINIDGNALFRQPKLKNMRDVSQEDDRENRASDWELNYIPLDGTIGCMVNGAGLAMATMDVIKLHGGEPANFLDVGGGATKERVSEALKIIVSDEKVKGILVNIFGGIVRCDLIADGILAAVKEVDVKIPVVVRLEGNNAQLGAEILNKSNLNVIAATSLTDAAKKIVAAVSE.

Residues 9-244 (KQLFASYGLP…VSQEDDRENR (236 aa)) enclose the ATP-grasp domain. ATP is bound by residues lysine 46, 53–55 (GRG), glutamate 99, cysteine 102, and glutamate 107. Positions 199 and 213 each coordinate Mg(2+). Substrate is bound by residues asparagine 264 and 321 to 323 (GIV).

This sequence belongs to the succinate/malate CoA ligase beta subunit family. As to quaternary structure, heterotetramer of two alpha and two beta subunits. The cofactor is Mg(2+).

The enzyme catalyses succinate + ATP + CoA = succinyl-CoA + ADP + phosphate. It carries out the reaction GTP + succinate + CoA = succinyl-CoA + GDP + phosphate. It participates in carbohydrate metabolism; tricarboxylic acid cycle; succinate from succinyl-CoA (ligase route): step 1/1. Succinyl-CoA synthetase functions in the citric acid cycle (TCA), coupling the hydrolysis of succinyl-CoA to the synthesis of either ATP or GTP and thus represents the only step of substrate-level phosphorylation in the TCA. The beta subunit provides nucleotide specificity of the enzyme and binds the substrate succinate, while the binding sites for coenzyme A and phosphate are found in the alpha subunit. The protein is Succinate--CoA ligase [ADP-forming] subunit beta of Legionella pneumophila (strain Corby).